The following is a 315-amino-acid chain: Adenine deaminase (315 aa).

Zn(2+) is bound by residues His-14, His-16, and His-194. Glu-197 acts as the Proton donor in catalysis. Residue Asp-275 participates in Zn(2+) binding. Asp-276 is a binding site for substrate.

The protein belongs to the metallo-dependent hydrolases superfamily. Adenosine and AMP deaminases family. Adenine deaminase type 2 subfamily. Zn(2+) is required as a cofactor.

It carries out the reaction adenine + H2O + H(+) = hypoxanthine + NH4(+). Functionally, catalyzes the hydrolytic deamination of adenine to hypoxanthine. Plays an important role in the purine salvage pathway and in nitrogen catabolism. The polypeptide is Adenine deaminase (Pseudomonas putida (strain GB-1)).